A 393-amino-acid chain; its full sequence is Nuclear hormone receptor family member nhr-90 (393 aa).

Residues 6 to 79 constitute a DNA-binding region (nuclear receptor); sequence LQTCKICGAE…AGMKIEYFQH (74 aa). An NR C4-type zinc finger spans residues 9 to 30; sequence CKICGAENTRGNHFGVQCCRAC. Residues 47-62 form an NR C4-type; degenerate zinc finger; sequence CLSVHCGEAARFCKPC. One can recognise an NR LBD domain in the interval 121 to 388; that stretch reads DLNSLVGKAS…FSHPEMFIDT (268 aa).

It belongs to the nuclear hormone receptor family.

The protein resides in the nucleus. Orphan nuclear receptor. In Caenorhabditis elegans, this protein is Nuclear hormone receptor family member nhr-90 (nhr-90).